A 332-amino-acid polypeptide reads, in one-letter code: Methionine synthase (332 aa).

His-211, Cys-213, and Cys-296 together coordinate Zn(2+).

It belongs to the archaeal MetE family. Requires Zn(2+) as cofactor.

It functions in the pathway amino-acid biosynthesis; L-methionine biosynthesis via de novo pathway. Functionally, catalyzes the transfer of a methyl group to L-homocysteine resulting in methionine formation. The physiological methyl donor is unknown. This chain is Methionine synthase, found in Saccharolobus solfataricus (strain ATCC 35092 / DSM 1617 / JCM 11322 / P2) (Sulfolobus solfataricus).